An 819-amino-acid polypeptide reads, in one-letter code: MEDMAYSVEIDRKWQKIWEETKLYKFNPENVDKKLYCLEMFPYPSGAKLHIGHWYNYGPTDSWARMKRMQGYEVFHPMGFDAFGLPAENYAIKTGIHPYDSTMENIRTMERQLREMGVTFDWDYEIITCLPEYYKWTQWIFLKLYEAGLAYRKKAPVNWCPSCQTVLANEQVIDGKCERCGTEVTKKELTQWFFKITAYAEELLEKLDDLDWPEKTKMMQRNWIGKSEGAEIEFKIDGKDLSFRVFTTRADTLFGATYVVLAPEHELVDLITTEEYKEAVEEYKEYAKKQSEIERLSTEKEKTGVFTGAYAIHPLTGEKLPIWIADYVLVTYGTGCVMGVPGHDERDYEFATKYNLPIKRVIKGVGDVDDSLPFVEYGILVNSEEFTGMTSEEARVKIVEKLKAEGKAEFKVNYRMRDWLVSRQRYWGAPIPIIHCERCGIVPVPEEDLPVLLPYDVEFEPTGESPLKKHAGFMNVTCPKCGGPALRDPDTLDTFVDSSWYYLRYPDNKNDKEPFNKEWINKMLPVDKYVGGAEHATMHLLYSRFITKVLRDLGYLNFDEPFLSLVHQGTILGPDGSRMSKSRGNVISPDDYIKQYGSDVFRLYLMFGFSYSEGGPWSDEGIKAIARFVNRVERFIEKFIETRQNPGKTKEEMEDAEKELNYVRHYTIKHVTLDADKFEFNTAIARIMELVNALYKYENEVEVKNMKFYEDVVRDFVKILAPFAPHFSEEMWERLGYEYSVFNQKWPEWDEKALERDMIEIAIQVNGKVRSKAQVPSNATDEELKQIALSDERVKSYLDGKEIKKVIIVKNRLVNIVVN.

Positions 42–53 (PYPSGAKLHIGH) match the 'HIGH' region motif. The 'KMSKS' region signature appears at 578-582 (RMSKS). K581 is a binding site for ATP.

Belongs to the class-I aminoacyl-tRNA synthetase family.

Its subcellular location is the cytoplasm. The catalysed reaction is tRNA(Leu) + L-leucine + ATP = L-leucyl-tRNA(Leu) + AMP + diphosphate. The polypeptide is Leucine--tRNA ligase (Caldanaerobacter subterraneus subsp. tengcongensis (strain DSM 15242 / JCM 11007 / NBRC 100824 / MB4) (Thermoanaerobacter tengcongensis)).